A 339-amino-acid chain; its full sequence is Homocysteine S-methyltransferase 2 (339 aa).

The Hcy-binding domain occupies alanine 12 to leucine 326. Positions 244, 311, and 312 each coordinate Zn(2+).

As to quaternary structure, monomer. Zn(2+) serves as cofactor.

The catalysed reaction is S-methyl-L-methionine + L-homocysteine = 2 L-methionine + H(+). Its function is as follows. Catalyzes methyl transfer from S-methylmethionine (SMM) to adenosyl-L-homocysteine (AdoMet). SMM degradation (by HMT-1, HMT-2, HMT-3 and HMT-4) and biosynthesis (by MMT1) constitute the SMM cycle in plants, which is probably required to achieve short term control of AdoMet level. This Zea mays (Maize) protein is Homocysteine S-methyltransferase 2 (HMT-2).